Reading from the N-terminus, the 243-residue chain is Type III pantothenate kinase (243 aa).

ATP is bound at residue 6 to 13 (DIGNTVAK). Residues Tyr-86 and 93 to 96 (GYDR) each bind substrate. The active-site Proton acceptor is Asp-95. Asp-116 contacts K(+). Thr-119 contacts ATP. A substrate-binding site is contributed by Thr-171.

It belongs to the type III pantothenate kinase family. In terms of assembly, homodimer. NH4(+) serves as cofactor. It depends on K(+) as a cofactor.

It is found in the cytoplasm. It carries out the reaction (R)-pantothenate + ATP = (R)-4'-phosphopantothenate + ADP + H(+). It functions in the pathway cofactor biosynthesis; coenzyme A biosynthesis; CoA from (R)-pantothenate: step 1/5. In terms of biological role, catalyzes the phosphorylation of pantothenate (Pan), the first step in CoA biosynthesis. The polypeptide is Type III pantothenate kinase (Bacteroides fragilis (strain ATCC 25285 / DSM 2151 / CCUG 4856 / JCM 11019 / LMG 10263 / NCTC 9343 / Onslow / VPI 2553 / EN-2)).